Reading from the N-terminus, the 388-residue chain is Formate-dependent phosphoribosylglycinamide formyltransferase (388 aa).

N(1)-(5-phospho-beta-D-ribosyl)glycinamide-binding positions include 20–21 and Glu80; that span reads EL. Residues Arg112, Lys153, 158–163, 193–196, and Glu201 contribute to the ATP site; these read SSGKGQ and EEFI. In terms of domain architecture, ATP-grasp spans 117 to 306; the sequence is RLAFEKLGLR…EFEIHARAIL (190 aa). 2 residues coordinate Mg(2+): Glu265 and Glu277. Residues Asp284, Lys352, and 359–360 contribute to the N(1)-(5-phospho-beta-D-ribosyl)glycinamide site; that span reads RR.

The protein belongs to the PurK/PurT family. Homodimer.

It catalyses the reaction N(1)-(5-phospho-beta-D-ribosyl)glycinamide + formate + ATP = N(2)-formyl-N(1)-(5-phospho-beta-D-ribosyl)glycinamide + ADP + phosphate + H(+). The protein operates within purine metabolism; IMP biosynthesis via de novo pathway; N(2)-formyl-N(1)-(5-phospho-D-ribosyl)glycinamide from N(1)-(5-phospho-D-ribosyl)glycinamide (formate route): step 1/1. Involved in the de novo purine biosynthesis. Catalyzes the transfer of formate to 5-phospho-ribosyl-glycinamide (GAR), producing 5-phospho-ribosyl-N-formylglycinamide (FGAR). Formate is provided by PurU via hydrolysis of 10-formyl-tetrahydrofolate. The sequence is that of Formate-dependent phosphoribosylglycinamide formyltransferase from Methanococcus maripaludis (strain C7 / ATCC BAA-1331).